The following is a 231-amino-acid chain: MAKKGKKYQEAASKVDRTQYYSVEEAIKLAKETSVANFDASVEVAFRLGIDTRKNDQQIRGAVVLPHGTGKSQRVLVFAKGDKITEAEEAGADYVGEADYVQKIQQGWFDFDVVVATPDMMGEVGKLGRVLGPKGLMPNPKTGTVTMDVKKAVEEIKAGKVEYRAEKAGIVHASIGKVSFDEEKLVDNFRTLQDVLAKAKPASAKGTYFKSVAVTTTMGPGVKVDTSSFKL.

This sequence belongs to the universal ribosomal protein uL1 family. As to quaternary structure, part of the 50S ribosomal subunit.

Its function is as follows. Binds directly to 23S rRNA. The L1 stalk is quite mobile in the ribosome, and is involved in E site tRNA release. In terms of biological role, protein L1 is also a translational repressor protein, it controls the translation of the L11 operon by binding to its mRNA. This is Large ribosomal subunit protein uL1 from Staphylococcus epidermidis (strain ATCC 35984 / DSM 28319 / BCRC 17069 / CCUG 31568 / BM 3577 / RP62A).